Consider the following 192-residue polypeptide: Ion-translocating oxidoreductase complex subunit A (192 aa).

The next 6 membrane-spanning stretches (helical) occupy residues 5-25, 39-59, 63-83, 102-122, 134-154, and 171-191; these read ILLI…FLGL, VGMG…AYLV, ILIP…VIAV, LLGI…VALL, VVYG…FAAL, and SIAL…TGLV.

It belongs to the NqrDE/RnfAE family. In terms of assembly, the complex is composed of six subunits: RnfA, RnfB, RnfC, RnfD, RnfE and RnfG.

It is found in the cell inner membrane. Its function is as follows. Part of a membrane-bound complex that couples electron transfer with translocation of ions across the membrane. The chain is Ion-translocating oxidoreductase complex subunit A from Haemophilus influenzae (strain ATCC 51907 / DSM 11121 / KW20 / Rd).